The following is a 285-amino-acid chain: Probable enoyl-CoA hydratase echA12 (285 aa).

It belongs to the enoyl-CoA hydratase/isomerase family.

It carries out the reaction a (3S)-3-hydroxyacyl-CoA = a (2E)-enoyl-CoA + H2O. The catalysed reaction is a 4-saturated-(3S)-3-hydroxyacyl-CoA = a (3E)-enoyl-CoA + H2O. Its function is as follows. Could possibly oxidize fatty acids using specific components. This Mycobacterium tuberculosis (strain CDC 1551 / Oshkosh) protein is Probable enoyl-CoA hydratase echA12 (echA12).